The chain runs to 313 residues: Protoheme IX farnesyltransferase (313 aa).

Helical transmembrane passes span 33–53, 59–79, 107–127, 129–149, 162–182, 188–208, 212–232, 252–272, and 292–312; these read IALMKLRVVELLLVSTVPVML, MPSWWLIAVTLLAGTLSAGSA, VEPAQALRFGIALGIISTLMF, LLVNWTSAVLSVGAIAFYVFV, IVIGGAAGCFPVLIGWSAVTG, AVLLFAVVFFWTPPHFWALAI, DDYAAAGVPMLPVVATLEVVT, VADIGLVYLVPAVLLGAWFVA, and LFHMSITYLTLLFAALAAAAL.

This sequence belongs to the UbiA prenyltransferase family. Protoheme IX farnesyltransferase subfamily.

The protein localises to the cell membrane. It catalyses the reaction heme b + (2E,6E)-farnesyl diphosphate + H2O = Fe(II)-heme o + diphosphate. The protein operates within porphyrin-containing compound metabolism; heme O biosynthesis; heme O from protoheme: step 1/1. Its function is as follows. Converts heme B (protoheme IX) to heme O by substitution of the vinyl group on carbon 2 of heme B porphyrin ring with a hydroxyethyl farnesyl side group. The chain is Protoheme IX farnesyltransferase from Parafrankia sp. (strain EAN1pec).